A 376-amino-acid polypeptide reads, in one-letter code: 23S rRNA (uracil(747)-C(5))-methyltransferase RlmC (376 aa).

[4Fe-4S] cluster contacts are provided by C3, C11, C14, and C87. The S-adenosyl-L-methionine site is built by Q212, F241, E262, and N307. C334 (nucleophile) is an active-site residue.

This sequence belongs to the class I-like SAM-binding methyltransferase superfamily. RNA M5U methyltransferase family. RlmC subfamily.

It catalyses the reaction uridine(747) in 23S rRNA + S-adenosyl-L-methionine = 5-methyluridine(747) in 23S rRNA + S-adenosyl-L-homocysteine + H(+). Functionally, catalyzes the formation of 5-methyl-uridine at position 747 (m5U747) in 23S rRNA. The polypeptide is 23S rRNA (uracil(747)-C(5))-methyltransferase RlmC (Yersinia pseudotuberculosis serotype O:1b (strain IP 31758)).